The primary structure comprises 292 residues: G1/S-specific cyclin-D3 (292 aa).

The Cyclin N-terminal domain occupies V27 to L152. The tract at residues S254–L292 is disordered. 2 positions are modified to phosphoserine: S264 and S279. Residues G272–T285 are compositionally biased toward low complexity. T283 carries the phosphothreonine modification.

This sequence belongs to the cyclin family. Cyclin D subfamily. In terms of assembly, interacts with the CDK4 and CDK6 protein kinases to form a serine/threonine kinase holoenzyme complex. The cyclin subunit imparts substrate specificity to the complex. Interacts with ATF5. Interacts with EIF3K. Component of the ternary complex cyclin D/CDK4/CDKN1B required for nuclear translocation and modulation of CDK4-mediated kinase activity. Can form similar complexes with either CDKN1A or CDKN2A. Phosphorylation at Thr-283 by MAP kinases is required for ubiquitination and degradation by the DCX(AMBRA1) complex. In terms of processing, ubiquitinated by the DCX(AMBRA1) complex during the transition from G1 to S cell phase, leading to its degradation: ubiquitination is dependent on Thr-283 phosphorylation. The DCX(AMBRA1) complex represents the major regulator of CCND3 stability during the G1/S transition. Polyubiquitinated by the SCF(FBXL2) complex, leading to proteasomal degradation.

Its subcellular location is the nucleus. The protein resides in the cytoplasm. Regulatory component of the cyclin D3-CDK4 (DC) complex that phosphorylates and inhibits members of the retinoblastoma (RB) protein family including RB1 and regulates the cell-cycle during G(1)/S transition. Phosphorylation of RB1 allows dissociation of the transcription factor E2F from the RB/E2F complex and the subsequent transcription of E2F target genes which are responsible for the progression through the G(1) phase. Hypophosphorylates RB1 in early G(1) phase. Cyclin D-CDK4 complexes are major integrators of various mitogenenic and antimitogenic signals. Component of the ternary complex, cyclin D3/CDK4/CDKN1B, required for nuclear translocation and activity of the cyclin D-CDK4 complex. Shows transcriptional coactivator activity with ATF5 independently of CDK4. In Homo sapiens (Human), this protein is G1/S-specific cyclin-D3.